We begin with the raw amino-acid sequence, 406 residues long: Argininosuccinate synthase (406 aa).

Residues 11–19 (AYSGGLDTS) and Ala38 each bind ATP. Residues Tyr91 and Ser96 each coordinate L-citrulline. Gly121 lines the ATP pocket. Residues Thr123, Asn127, and Asp128 each coordinate L-aspartate. An L-citrulline-binding site is contributed by Asn127. 5 residues coordinate L-citrulline: Arg131, Ser181, Ser190, Glu266, and Tyr278.

This sequence belongs to the argininosuccinate synthase family. Type 1 subfamily. In terms of assembly, homotetramer.

The protein localises to the cytoplasm. It carries out the reaction L-citrulline + L-aspartate + ATP = 2-(N(omega)-L-arginino)succinate + AMP + diphosphate + H(+). It participates in amino-acid biosynthesis; L-arginine biosynthesis; L-arginine from L-ornithine and carbamoyl phosphate: step 2/3. This Campylobacter lari (strain RM2100 / D67 / ATCC BAA-1060) protein is Argininosuccinate synthase.